The following is a 348-amino-acid chain: Caricain (348 aa).

Residues methionine 1 to cysteine 16 form the signal peptide. A propeptide spans leucine 17 to asparagine 132 (activation peptide). Asparagine 86 carries an N-linked (GlcNAc...) asparagine glycan. 3 cysteine pairs are disulfide-bonded: cysteine 154-cysteine 195, cysteine 188-cysteine 227, and cysteine 285-cysteine 336. Cysteine 157 is a catalytic residue. An E64-binding site is contributed by cysteine 157. Active-site residues include histidine 291 and asparagine 311.

Belongs to the peptidase C1 family. Monomer.

It catalyses the reaction Hydrolysis of proteins with broad specificity for peptide bonds, similar to those of papain and chymopapain.. Repressed by the active-site-directed cysteine protease inhibitor E64 (L-trans-epoxysuccinyl-leucylamide-(4-guanido)-butane) produced by Aspergillus japonicus. Cysteine proteinase with a high level of diversity in substrate specificity. The sequence is that of Caricain from Carica papaya (Papaya).